The primary structure comprises 410 residues: PHAF1 protein At3g51130 (410 aa).

The protein belongs to the PHAF1 family.

The polypeptide is PHAF1 protein At3g51130 (Arabidopsis thaliana (Mouse-ear cress)).